The primary structure comprises 366 residues: Histidinol-phosphate aminotransferase (366 aa).

K231 is modified (N6-(pyridoxal phosphate)lysine).

The protein belongs to the class-II pyridoxal-phosphate-dependent aminotransferase family. Histidinol-phosphate aminotransferase subfamily. Pyridoxal 5'-phosphate serves as cofactor.

The catalysed reaction is L-histidinol phosphate + 2-oxoglutarate = 3-(imidazol-4-yl)-2-oxopropyl phosphate + L-glutamate. It functions in the pathway amino-acid biosynthesis; L-histidine biosynthesis; L-histidine from 5-phospho-alpha-D-ribose 1-diphosphate: step 7/9. The chain is Histidinol-phosphate aminotransferase from Halobacterium salinarum (strain ATCC 29341 / DSM 671 / R1).